Reading from the N-terminus, the 769-residue chain is Signal transducer and activator of transcription 3.1 (769 aa).

The Essential for nuclear import motif lies at Asp150 to Met162. The region spanning Trp580–Leu670 is the SH2 domain. Residue Ser728 is modified to Phosphoserine; by NLK.

Belongs to the transcription factor STAT family. As to quaternary structure, forms a homodimer or a heterodimer with a related family member, such as stat1. Interacts with nlk.2. Post-translationally, phosphorylation of both tyrosine and serine residues, together with dimerization, is required for mesoderm induction.

Its subcellular location is the cytoplasm. The protein resides in the nucleus. Its function is as follows. Transcription factor that binds to target promoter sequences and activates transcription upon il6st/gp130 stimulation. Mediates ventralization of embryos, at least in part via inhibition of smad2 signaling. Required for hairy2 to induce dll1/delta1 and promote neural crest cell proliferation and differentiation. Involved in TGFbeta-mediated mesoderm induction in early embryos, acting downstream of map3k7/tak1 and nlk.2. This chain is Signal transducer and activator of transcription 3.1 (stat3.1), found in Xenopus laevis (African clawed frog).